The chain runs to 129 residues: Small ribosomal subunit protein uS9 (129 aa).

Belongs to the universal ribosomal protein uS9 family.

This is Small ribosomal subunit protein uS9 from Wolinella succinogenes (strain ATCC 29543 / DSM 1740 / CCUG 13145 / JCM 31913 / LMG 7466 / NCTC 11488 / FDC 602W) (Vibrio succinogenes).